We begin with the raw amino-acid sequence, 419 residues long: UDP-N-acetylmuramoylalanine--D-glutamate ligase (419 aa).

109–115 (GSAGKTT) is an ATP binding site.

It belongs to the MurCDEF family.

The protein localises to the cytoplasm. It carries out the reaction UDP-N-acetyl-alpha-D-muramoyl-L-alanine + D-glutamate + ATP = UDP-N-acetyl-alpha-D-muramoyl-L-alanyl-D-glutamate + ADP + phosphate + H(+). The protein operates within cell wall biogenesis; peptidoglycan biosynthesis. Its function is as follows. Cell wall formation. Catalyzes the addition of glutamate to the nucleotide precursor UDP-N-acetylmuramoyl-L-alanine (UMA). In Chlamydia caviae (strain ATCC VR-813 / DSM 19441 / 03DC25 / GPIC) (Chlamydophila caviae), this protein is UDP-N-acetylmuramoylalanine--D-glutamate ligase.